A 112-amino-acid polypeptide reads, in one-letter code: Peptidyl-tRNA hydrolase (112 aa).

The protein belongs to the PTH2 family.

It is found in the cytoplasm. It carries out the reaction an N-acyl-L-alpha-aminoacyl-tRNA + H2O = an N-acyl-L-amino acid + a tRNA + H(+). Functionally, the natural substrate for this enzyme may be peptidyl-tRNAs which drop off the ribosome during protein synthesis. The protein is Peptidyl-tRNA hydrolase of Methanothermobacter thermautotrophicus (strain ATCC 29096 / DSM 1053 / JCM 10044 / NBRC 100330 / Delta H) (Methanobacterium thermoautotrophicum).